The following is a 95-amino-acid chain: Large ribosomal subunit protein bL25 (95 aa).

It belongs to the bacterial ribosomal protein bL25 family. Part of the 50S ribosomal subunit; part of the 5S rRNA/L5/L18/L25 subcomplex. Contacts the 5S rRNA. Binds to the 5S rRNA independently of L5 and L18.

In terms of biological role, this is one of the proteins that binds to the 5S RNA in the ribosome where it forms part of the central protuberance. In Mannheimia succiniciproducens (strain KCTC 0769BP / MBEL55E), this protein is Large ribosomal subunit protein bL25.